The chain runs to 206 residues: Translation initiation factor IF-3 (206 aa).

This sequence belongs to the IF-3 family. Monomer.

The protein resides in the cytoplasm. Its function is as follows. IF-3 binds to the 30S ribosomal subunit and shifts the equilibrium between 70S ribosomes and their 50S and 30S subunits in favor of the free subunits, thus enhancing the availability of 30S subunits on which protein synthesis initiation begins. This Shigella flexneri protein is Translation initiation factor IF-3.